The chain runs to 303 residues: Signal recognition particle receptor FtsY (303 aa).

GTP-binding positions include 108–115, 190–194, and 254–257; these read GVNGVGKT, DTAGR, and TKLD.

Belongs to the GTP-binding SRP family. FtsY subfamily. Part of the signal recognition particle protein translocation system, which is composed of SRP and FtsY. SRP is a ribonucleoprotein composed of Ffh and a 4.5S RNA molecule.

It localises to the cell inner membrane. The protein resides in the cytoplasm. It carries out the reaction GTP + H2O = GDP + phosphate + H(+). In terms of biological role, involved in targeting and insertion of nascent membrane proteins into the cytoplasmic membrane. Acts as a receptor for the complex formed by the signal recognition particle (SRP) and the ribosome-nascent chain (RNC). Interaction with SRP-RNC leads to the transfer of the RNC complex to the Sec translocase for insertion into the membrane, the hydrolysis of GTP by both Ffh and FtsY, and the dissociation of the SRP-FtsY complex into the individual components. This Rickettsia prowazekii (strain Madrid E) protein is Signal recognition particle receptor FtsY.